A 461-amino-acid polypeptide reads, in one-letter code: D-phenylhydantoinase (461 aa).

A divalent metal cation contacts are provided by His59, His61, and Lys151. N6-carboxylysine is present on Lys151. Substrate is bound at residue Tyr156. His182 and His239 together coordinate a divalent metal cation. Ser286 serves as a coordination point for substrate. Position 313 (Asp313) interacts with a divalent metal cation. Residue Asn335 coordinates substrate.

It belongs to the metallo-dependent hydrolases superfamily. Hydantoinase/dihydropyrimidinase family. As to quaternary structure, homotetramer. It depends on a divalent metal cation as a cofactor. Carboxylation allows a single lysine to coordinate two divalent metal cations.

The catalysed reaction is D-5-phenylhydantoin + H2O = N-carbamoyl-D-phenylglycine + H(+). In terms of biological role, catalyzes the stereospecific hydrolysis of the cyclic amide bond of D-hydantoin derivatives with an aromatic side chains at the 5'-position. Has no activity on dihydropyrimidines. The physiological function is unknown. The protein is D-phenylhydantoinase of Escherichia coli O81 (strain ED1a).